The following is a 318-amino-acid chain: Probable endolytic peptidoglycan transglycosylase RlpA (318 aa).

A signal peptide spans 1–21 (MMDKRVVAVAAVLWNVQMLFA). The disordered stretch occupies residues 121-191 (DPNAHASQQR…GVANTTDVPA (71 aa)). The segment covering 125-137 (HASQQRNDRQTSP) has biased composition (polar residues).

Belongs to the RlpA family.

In terms of biological role, lytic transglycosylase with a strong preference for naked glycan strands that lack stem peptides. The protein is Probable endolytic peptidoglycan transglycosylase RlpA of Treponema pallidum (strain Nichols).